Here is a 381-residue protein sequence, read N- to C-terminus: GDSL esterase/lipase At3g48460 (381 aa).

Positions 1–26 are cleaved as a signal peptide; the sequence is MSSSISPLLTTAISVAILLFSTISTA. Serine 45 acts as the Nucleophile in catalysis. N-linked (GlcNAc...) asparagine glycans are attached at residues asparagine 112, asparagine 140, and asparagine 258. Residues aspartate 344 and histidine 347 contribute to the active site.

It belongs to the 'GDSL' lipolytic enzyme family.

The protein resides in the secreted. This chain is GDSL esterase/lipase At3g48460, found in Arabidopsis thaliana (Mouse-ear cress).